Consider the following 236-residue polypeptide: 1-(5-phosphoribosyl)-5-[(5-phosphoribosylamino)methylideneamino] imidazole-4-carboxamide isomerase (236 aa).

The active-site Proton acceptor is Asp8. Asp129 serves as the catalytic Proton donor.

The protein belongs to the HisA/HisF family.

The protein resides in the cytoplasm. It catalyses the reaction 1-(5-phospho-beta-D-ribosyl)-5-[(5-phospho-beta-D-ribosylamino)methylideneamino]imidazole-4-carboxamide = 5-[(5-phospho-1-deoxy-D-ribulos-1-ylimino)methylamino]-1-(5-phospho-beta-D-ribosyl)imidazole-4-carboxamide. Its pathway is amino-acid biosynthesis; L-histidine biosynthesis; L-histidine from 5-phospho-alpha-D-ribose 1-diphosphate: step 4/9. The polypeptide is 1-(5-phosphoribosyl)-5-[(5-phosphoribosylamino)methylideneamino] imidazole-4-carboxamide isomerase (Methanosphaerula palustris (strain ATCC BAA-1556 / DSM 19958 / E1-9c)).